A 228-amino-acid polypeptide reads, in one-letter code: Aquaporin Z (228 aa).

5 consecutive transmembrane segments (helical) span residues 1-21 (MLNK…GGCG), 46-66 (TVLT…NPAV), 82-102 (IPYW…LYVI), 129-149 (MMAG…IILG), and 154-174 (LAPA…IHLV). Residues 63–65 (NPA) carry the NPA 1 motif. An NPA 2 motif is present at residues 184-186 (NPA). Residues 205-225 (LFWVAPLVGAVIGAIIWKGLL) form a helical membrane-spanning segment.

This sequence belongs to the MIP/aquaporin (TC 1.A.8) family. Homotetramer.

The protein resides in the cell inner membrane. The catalysed reaction is H2O(in) = H2O(out). Its function is as follows. Channel that permits osmotically driven movement of water in both directions. It is involved in the osmoregulation and in the maintenance of cell turgor during volume expansion in rapidly growing cells. It mediates rapid entry or exit of water in response to abrupt changes in osmolarity. This Brucella suis biovar 1 (strain 1330) protein is Aquaporin Z.